The primary structure comprises 545 residues: Ribulokinase (545 aa).

The protein belongs to the ribulokinase family.

It carries out the reaction D-ribulose + ATP = D-ribulose 5-phosphate + ADP + H(+). The catalysed reaction is L-ribulose + ATP = L-ribulose 5-phosphate + ADP + H(+). Its pathway is carbohydrate degradation; L-arabinose degradation via L-ribulose; D-xylulose 5-phosphate from L-arabinose (bacterial route): step 2/3. The protein is Ribulokinase of Staphylococcus aureus (strain bovine RF122 / ET3-1).